Consider the following 665-residue polypeptide: Fructose-1,6-bisphosphatase class 3 (665 aa).

The protein belongs to the FBPase class 3 family. It depends on Mn(2+) as a cofactor.

It catalyses the reaction beta-D-fructose 1,6-bisphosphate + H2O = beta-D-fructose 6-phosphate + phosphate. The protein operates within carbohydrate biosynthesis; gluconeogenesis. The protein is Fructose-1,6-bisphosphatase class 3 of Clostridium novyi (strain NT).